A 633-amino-acid chain; its full sequence is Threonine--tRNA ligase (633 aa).

The 61-residue stretch at 1 to 61 (MINVYFSDNS…TEDCKFEVIT (61 aa)) folds into the TGS domain. A catalytic region spans residues 242–533 (DHRKIGKELE…LIEHHSGKLP (292 aa)). Zn(2+)-binding residues include Cys-333, His-384, and His-510.

It belongs to the class-II aminoacyl-tRNA synthetase family. Homodimer. Zn(2+) is required as a cofactor.

The protein localises to the cytoplasm. The catalysed reaction is tRNA(Thr) + L-threonine + ATP = L-threonyl-tRNA(Thr) + AMP + diphosphate + H(+). Catalyzes the attachment of threonine to tRNA(Thr) in a two-step reaction: L-threonine is first activated by ATP to form Thr-AMP and then transferred to the acceptor end of tRNA(Thr). Also edits incorrectly charged L-seryl-tRNA(Thr). The sequence is that of Threonine--tRNA ligase from Ehrlichia ruminantium (strain Gardel).